The chain runs to 201 residues: Large ribosomal subunit protein uL4 (201 aa).

The segment at 45-71 is disordered; the sequence is AQKTRAEVTGSGKKPWRQKGTGRARAG.

This sequence belongs to the universal ribosomal protein uL4 family. Part of the 50S ribosomal subunit.

In terms of biological role, one of the primary rRNA binding proteins, this protein initially binds near the 5'-end of the 23S rRNA. It is important during the early stages of 50S assembly. It makes multiple contacts with different domains of the 23S rRNA in the assembled 50S subunit and ribosome. Functionally, forms part of the polypeptide exit tunnel. The sequence is that of Large ribosomal subunit protein uL4 from Shewanella sp. (strain MR-4).